A 279-amino-acid chain; its full sequence is Conserved oligomeric Golgi complex subunit 7 (279 aa).

Component of the conserved oligomeric Golgi (COG or Sec34/Sec35) complex which consists of eight different proteins COG1-COG8.

Its subcellular location is the golgi apparatus membrane. Its function is as follows. Acts as a component of the peripheral membrane COG complex that is involved in intra-Golgi protein trafficking. COG is located at the cis-Golgi, and regulates tethering of retrograde intra-Golgi vesicles and possibly a number of other membrane trafficking events. This Saccharomyces cerevisiae (strain ATCC 204508 / S288c) (Baker's yeast) protein is Conserved oligomeric Golgi complex subunit 7 (COG7).